We begin with the raw amino-acid sequence, 405 residues long: MEKYNNWKLKFYTIWAGQAVSLITSAILQMAIIFYLTEKTGSAMVLSMASLLGFLPYAVFGPAIGVLVDRHDRKKIMIGADLIIAAAGSVLTIVAFYMELPVWMVMIVLFIRSIGTAFHTPALNAVTPLLVPEEQLTKCAGYSQSLQSISYIVSPAVAALLYSVWELNAIIAIDVLGAVIASITVAIVRIPKLGDRVQSLDPNFIREMQEGMAVLRQNKGLFALLLVGTLYMFVYMPINALFPLISMDYFNGTPVHISITEISFASGMLIGGLLLGLFGNYQKRILLITASIFMMGISLTISGLLPQSGFFIFVVCCAIMGLSVPFYSGVQTALFQEKIKPEYLGRVFSLTGSIMSLAMPIGLILSALFADRIGVNHWFLLSGTLIICIAIVCPMINEIRKLDLK.

A run of 11 helical transmembrane segments spans residues 14 to 34, 48 to 68, 76 to 98, 145 to 165, 168 to 188, 222 to 242, 259 to 279, 285 to 305, 310 to 330, 350 to 370, and 373 to 393; these read IWAGQAVSLITSAILQMAIIF, MASLLGFLPYAVFGPAIGVLV, IMIGADLIIAAAGSVLTIVAFYM, SLQSISYIVSPAVAALLYSVW, NAIIAIDVLGAVIASITVAIV, FALLLVGTLYMFVYMPINALF, ITEISFASGMLIGGLLLGLFG, ILLITASIFMMGISLTISGLL, FFIFVVCCAIMGLSVPFYSGV, LTGSIMSLAMPIGLILSALFA, and IGVNHWFLLSGTLIICIAIVC.

It belongs to the major facilitator superfamily. Drug:H(+) antiporter-3 (DHA3) (TC 2.A.1.21) family.

Its subcellular location is the cell membrane. Its function is as follows. Confers resistance to 14-membered macrolides including erythromycin and to 15-membered macrolides but not to 16-membered macrolides, lincosamides or analogs of streptogramin B. May function as an efflux pump to regulate intracellular macrolide levels. This Streptococcus pyogenes serotype M6 (strain ATCC BAA-946 / MGAS10394) protein is Macrolide efflux protein A.